Reading from the N-terminus, the 513-residue chain is ATP synthase subunit alpha (513 aa).

Residue Gly-169–Thr-176 participates in ATP binding.

This sequence belongs to the ATPase alpha/beta chains family. As to quaternary structure, F-type ATPases have 2 components, CF(1) - the catalytic core - and CF(0) - the membrane proton channel. CF(1) has five subunits: alpha(3), beta(3), gamma(1), delta(1), epsilon(1). CF(0) has three main subunits: a(1), b(2) and c(9-12). The alpha and beta chains form an alternating ring which encloses part of the gamma chain. CF(1) is attached to CF(0) by a central stalk formed by the gamma and epsilon chains, while a peripheral stalk is formed by the delta and b chains.

It is found in the cell inner membrane. It catalyses the reaction ATP + H2O + 4 H(+)(in) = ADP + phosphate + 5 H(+)(out). Functionally, produces ATP from ADP in the presence of a proton gradient across the membrane. The alpha chain is a regulatory subunit. This Francisella tularensis subsp. holarctica (strain OSU18) protein is ATP synthase subunit alpha.